A 135-amino-acid polypeptide reads, in one-letter code: UPF0102 protein RPC_0320 (135 aa).

Belongs to the UPF0102 family.

The chain is UPF0102 protein RPC_0320 from Rhodopseudomonas palustris (strain BisB18).